Consider the following 497-residue polypeptide: Cysteine--tRNA ligase (497 aa).

Cys-32 provides a ligand contact to Zn(2+). The 'HIGH' region signature appears at 34–44 (PTVYGEGHLGH). The Zn(2+) site is built by Cys-228, His-253, and Glu-257. The 'KMSKS' region motif lies at 285 to 289 (KMGKS). ATP is bound at residue Lys-288.

It belongs to the class-I aminoacyl-tRNA synthetase family. In terms of assembly, monomer. The cofactor is Zn(2+).

It localises to the cytoplasm. The catalysed reaction is tRNA(Cys) + L-cysteine + ATP = L-cysteinyl-tRNA(Cys) + AMP + diphosphate. This chain is Cysteine--tRNA ligase, found in Cytophaga hutchinsonii (strain ATCC 33406 / DSM 1761 / CIP 103989 / NBRC 15051 / NCIMB 9469 / D465).